Consider the following 64-residue polypeptide: Beta-defensin 1 (64 aa).

A signal peptide spans 1-20 (MRLHHLLLVLFFLVLSAGSG). A propeptide spanning residues 21 to 26 (FTQGIR) is cleaved from the precursor. 3 cysteine pairs are disulfide-bonded: cysteine 31/cysteine 60, cysteine 38/cysteine 53, and cysteine 43/cysteine 61.

It belongs to the beta-defensin family. Monomer. Homodimer.

It is found in the secreted. The protein localises to the membrane. Has bactericidal activity. May act as a ligand for C-C chemokine receptor CCR6. Positively regulates the sperm motility and bactericidal activity in a CCR6-dependent manner. Binds to CCR6 and triggers Ca2+ mobilization in the sperm which is important for its motility. In Capra hircus (Goat), this protein is Beta-defensin 1 (DEFB1).